Consider the following 359-residue polypeptide: Oxopyrrolidines biosynthesis cluster protein G (359 aa).

The disordered stretch occupies residues 1–32 (MDHLRDSLLSSLPRDSPSIGAMDYARRDREST). Low complexity predominate over residues 7–18 (SLLSSLPRDSPS).

Functionally, part of the gene cluster that mediates the biosynthesis of oxopyrrolidines, polyketide-amino acid hybrid compounds with feature structures of tetramic acid. Does not seem to play a role in oxopyrrolidines A and B biosynthesis. In Penicillium oxalicum (strain 114-2 / CGMCC 5302) (Penicillium decumbens), this protein is Oxopyrrolidines biosynthesis cluster protein G.